We begin with the raw amino-acid sequence, 105 residues long: Large ribosomal subunit protein bL21 (105 aa).

It belongs to the bacterial ribosomal protein bL21 family. As to quaternary structure, part of the 50S ribosomal subunit. Contacts protein L20.

Its function is as follows. This protein binds to 23S rRNA in the presence of protein L20. This chain is Large ribosomal subunit protein bL21, found in Parabacteroides distasonis (strain ATCC 8503 / DSM 20701 / CIP 104284 / JCM 5825 / NCTC 11152).